Here is a 394-residue protein sequence, read N- to C-terminus: Ribulose bisphosphate carboxylase large chain (394 aa).

Residue lysine 5 is modified to N6,N6,N6-trimethyllysine. Substrate is bound by residues asparagine 114 and threonine 164. Catalysis depends on lysine 166, which acts as the Proton acceptor. Position 168 (lysine 168) interacts with substrate. Lysine 192, aspartate 194, and glutamate 195 together coordinate Mg(2+). Lysine 192 carries the N6-carboxylysine modification. Residue histidine 285 is the Proton acceptor of the active site. Positions 286, 318, and 370 each coordinate substrate.

Belongs to the RuBisCO large chain family. Type I subfamily. In terms of assembly, heterohexadecamer of 8 large chains and 8 small chains. It depends on Mg(2+) as a cofactor.

The protein resides in the plastid. It is found in the chloroplast. The enzyme catalyses 2 (2R)-3-phosphoglycerate + 2 H(+) = D-ribulose 1,5-bisphosphate + CO2 + H2O. It catalyses the reaction D-ribulose 1,5-bisphosphate + O2 = 2-phosphoglycolate + (2R)-3-phosphoglycerate + 2 H(+). Its function is as follows. RuBisCO catalyzes two reactions: the carboxylation of D-ribulose 1,5-bisphosphate, the primary event in carbon dioxide fixation, as well as the oxidative fragmentation of the pentose substrate in the photorespiration process. Both reactions occur simultaneously and in competition at the same active site. In Euryale ferox (Gorgon plant), this protein is Ribulose bisphosphate carboxylase large chain (rbcL).